The sequence spans 338 residues: Ketol-acid reductoisomerase (NADP(+)) (338 aa).

Residues 1 to 181 (MKVFYDKDCD…GGGRTGIIET (181 aa)) enclose the KARI N-terminal Rossmann domain. NADP(+) is bound by residues 24–27 (YGSQ), R47, S50, T52, and 82–85 (DEFQ). H107 is a catalytic residue. G133 contacts NADP(+). The KARI C-terminal knotted domain maps to 182 to 327 (TFKDETETDL…EQLRSMMPWI (146 aa)). Residues D190, E194, E226, and E230 each coordinate Mg(2+). S251 is a substrate binding site.

Belongs to the ketol-acid reductoisomerase family. Mg(2+) serves as cofactor.

The catalysed reaction is (2R)-2,3-dihydroxy-3-methylbutanoate + NADP(+) = (2S)-2-acetolactate + NADPH + H(+). It carries out the reaction (2R,3R)-2,3-dihydroxy-3-methylpentanoate + NADP(+) = (S)-2-ethyl-2-hydroxy-3-oxobutanoate + NADPH + H(+). Its pathway is amino-acid biosynthesis; L-isoleucine biosynthesis; L-isoleucine from 2-oxobutanoate: step 2/4. It participates in amino-acid biosynthesis; L-valine biosynthesis; L-valine from pyruvate: step 2/4. In terms of biological role, involved in the biosynthesis of branched-chain amino acids (BCAA). Catalyzes an alkyl-migration followed by a ketol-acid reduction of (S)-2-acetolactate (S2AL) to yield (R)-2,3-dihydroxy-isovalerate. In the isomerase reaction, S2AL is rearranged via a Mg-dependent methyl migration to produce 3-hydroxy-3-methyl-2-ketobutyrate (HMKB). In the reductase reaction, this 2-ketoacid undergoes a metal-dependent reduction by NADPH to yield (R)-2,3-dihydroxy-isovalerate. This Pseudomonas entomophila (strain L48) protein is Ketol-acid reductoisomerase (NADP(+)).